Here is a 92-residue protein sequence, read N- to C-terminus: Small ribosomal subunit protein uS19 (92 aa).

This sequence belongs to the universal ribosomal protein uS19 family.

Protein S19 forms a complex with S13 that binds strongly to the 16S ribosomal RNA. This is Small ribosomal subunit protein uS19 from Acidovorax sp. (strain JS42).